A 138-amino-acid chain; its full sequence is Ribulose bisphosphate carboxylase small subunit (138 aa).

The protein belongs to the RuBisCO small chain family. In terms of assembly, heterohexadecamer of 8 large and 8 small subunits.

Its subcellular location is the plastid. The protein resides in the chloroplast. In terms of biological role, ruBisCO catalyzes two reactions: the carboxylation of D-ribulose 1,5-bisphosphate, the primary event in carbon dioxide fixation, as well as the oxidative fragmentation of the pentose substrate in the photorespiration process. Both reactions occur simultaneously and in competition at the same active site. Although the small subunit is not catalytic it is essential for maximal activity. This Pyropia suborbiculata (Red alga) protein is Ribulose bisphosphate carboxylase small subunit.